Here is a 118-residue protein sequence, read N- to C-terminus: Beta-2-microglobulin (118 aa).

The N-terminal stretch at 1–20 is a signal peptide; that stretch reads MARVVALVLLGLLSLTGLEA. The 94-residue stretch at 22–115 folds into the Ig-like C1-type domain; it reads PRVPKVQVYS…LKDPLIVKWD (94 aa). C45 and C99 form a disulfide bridge.

Belongs to the beta-2-microglobulin family. Heterodimer of an alpha chain and a beta chain. Beta-2-microglobulin is the beta-chain of major histocompatibility complex class I molecules.

The protein localises to the secreted. Functionally, component of the class I major histocompatibility complex (MHC). Involved in the presentation of peptide antigens to the immune system. The protein is Beta-2-microglobulin (B2M) of Equus caballus (Horse).